Reading from the N-terminus, the 390-residue chain is uncharacterized protein (390 aa).

A run of 2 helical transmembrane segments spans residues 27–47 (GGLITLVSGLIVIFIVLMEWI) and 356–376 (FGGFLSNVLALLGGCVTLASF).

The protein belongs to the ERGIC family.

Its subcellular location is the membrane. This is an uncharacterized protein from Schizosaccharomyces pombe (strain 972 / ATCC 24843) (Fission yeast).